The following is a 62-amino-acid chain: Small ribosomal subunit protein uS14 (62 aa).

4 residues coordinate Zn(2+): cysteine 25, cysteine 28, cysteine 41, and cysteine 44.

The protein belongs to the universal ribosomal protein uS14 family. Zinc-binding uS14 subfamily. Part of the 30S ribosomal subunit. Contacts proteins S3 and S10. Requires Zn(2+) as cofactor.

Functionally, binds 16S rRNA, required for the assembly of 30S particles and may also be responsible for determining the conformation of the 16S rRNA at the A site. The polypeptide is Small ribosomal subunit protein uS14 (Hydrogenobaculum sp. (strain Y04AAS1)).